A 261-amino-acid polypeptide reads, in one-letter code: Hemin import ATP-binding protein HmuV (261 aa).

Residues 5–241 (YTAENLTFTR…DALAHWYGAQ (237 aa)) form the ABC transporter domain. ATP is bound at residue 37-44 (GPNGAGKS).

Belongs to the ABC transporter superfamily. Heme (hemin) importer (TC 3.A.1.14.5) family. In terms of assembly, the complex is composed of two ATP-binding proteins (HmuV), two transmembrane proteins (HmuU) and a solute-binding protein (HmuT).

It is found in the cell inner membrane. Part of the ABC transporter complex HmuTUV involved in hemin import. Responsible for energy coupling to the transport system. The sequence is that of Hemin import ATP-binding protein HmuV from Enterobacter cloacae.